Consider the following 324-residue polypeptide: Carbamate kinase (324 aa).

Belongs to the carbamate kinase family.

It localises to the cytoplasm. The enzyme catalyses hydrogencarbonate + NH4(+) + ATP = carbamoyl phosphate + ADP + H2O + H(+). Its pathway is amino-acid degradation; L-arginine degradation via ADI pathway. This chain is Carbamate kinase, found in Rhizobium meliloti (strain 1021) (Ensifer meliloti).